A 136-amino-acid polypeptide reads, in one-letter code: Small ribosomal subunit protein eS17B (136 aa).

This sequence belongs to the eukaryotic ribosomal protein eS17 family. Component of the small ribosomal subunit (SSU). Mature yeast ribosomes consist of a small (40S) and a large (60S) subunit. The 40S small subunit contains 1 molecule of ribosomal RNA (18S rRNA) and 33 different proteins (encoded by 57 genes). The large 60S subunit contains 3 rRNA molecules (25S, 5.8S and 5S rRNA) and 46 different proteins (encoded by 81 genes).

The protein localises to the cytoplasm. Functionally, component of the ribosome, a large ribonucleoprotein complex responsible for the synthesis of proteins in the cell. The small ribosomal subunit (SSU) binds messenger RNAs (mRNAs) and translates the encoded message by selecting cognate aminoacyl-transfer RNA (tRNA) molecules. The large subunit (LSU) contains the ribosomal catalytic site termed the peptidyl transferase center (PTC), which catalyzes the formation of peptide bonds, thereby polymerizing the amino acids delivered by tRNAs into a polypeptide chain. The nascent polypeptides leave the ribosome through a tunnel in the LSU and interact with protein factors that function in enzymatic processing, targeting, and the membrane insertion of nascent chains at the exit of the ribosomal tunnel. This Saccharomyces cerevisiae (strain ATCC 204508 / S288c) (Baker's yeast) protein is Small ribosomal subunit protein eS17B.